A 230-amino-acid polypeptide reads, in one-letter code: GTP cyclohydrolase III (230 aa).

It belongs to the archaeal-type GTP cyclohydrolase family.

It catalyses the reaction GTP + 3 H2O = 2-amino-5-formylamino-6-(5-phospho-D-ribosylamino)pyrimidin-4(3H)-one + 2 phosphate + 2 H(+). In terms of biological role, catalyzes the formation of 2-amino-5-formylamino-6-ribofuranosylamino-4(3H)-pyrimidinone ribonucleotide monophosphate and inorganic phosphate from GTP. Also has an independent pyrophosphate phosphohydrolase activity. This Saccharolobus islandicus (strain M.16.27) (Sulfolobus islandicus) protein is GTP cyclohydrolase III.